A 113-amino-acid chain; its full sequence is U11-theraphotoxin-Hhn1a (113 aa).

Positions 1–21 (MNTVRVTFLLVFVLAVSLGQT) are cleaved as a signal peptide. The propeptide occupies 22 to 74 (DKDENRMEMQEKTEQGKSYLDFAENLLLQKLEELEAKLLEEDSEESRNSRQKR). Cystine bridges form between C75/C90, C82/C95, and C89/C110.

This sequence belongs to the neurotoxin 14 (magi-1) family. 01 (HNTX-16) subfamily. Expressed by the venom gland.

It localises to the secreted. Its function is as follows. Probable ion channel inhibitor. In Cyriopagopus hainanus (Chinese bird spider), this protein is U11-theraphotoxin-Hhn1a.